Consider the following 263-residue polypeptide: Translation initiation factor 2 subunit alpha (263 aa).

The S1 motif domain maps to 12 to 83 (GEILIATVKQ…RKGTIDVSLK (72 aa)).

The protein belongs to the eIF-2-alpha family. As to quaternary structure, heterotrimer composed of an alpha, a beta and a gamma chain.

EIF-2 functions in the early steps of protein synthesis by forming a ternary complex with GTP and initiator tRNA. The polypeptide is Translation initiation factor 2 subunit alpha (Sulfurisphaera tokodaii (strain DSM 16993 / JCM 10545 / NBRC 100140 / 7) (Sulfolobus tokodaii)).